Consider the following 349-residue polypeptide: tRNA pseudouridine synthase D (349 aa).

Phenylalanine 26 contributes to the substrate binding site. Aspartate 79 serves as the catalytic Nucleophile. Asparagine 128 lines the substrate pocket. One can recognise a TRUD domain in the interval 154-302 (GVPNYFGSQR…VEGARRAILL (149 aa)). Phenylalanine 328 contributes to the substrate binding site.

The protein belongs to the pseudouridine synthase TruD family.

It catalyses the reaction uridine(13) in tRNA = pseudouridine(13) in tRNA. Functionally, responsible for synthesis of pseudouridine from uracil-13 in transfer RNAs. The protein is tRNA pseudouridine synthase D of Yersinia enterocolitica serotype O:8 / biotype 1B (strain NCTC 13174 / 8081).